A 71-amino-acid polypeptide reads, in one-letter code: UPF0435 protein BPUM_0734 (71 aa).

This sequence belongs to the UPF0435 family.

The polypeptide is UPF0435 protein BPUM_0734 (Bacillus pumilus (strain SAFR-032)).